Consider the following 283-residue polypeptide: MHTALRSILIVTKSGHREAEALGERMRAWLAARGLSARVVENTGDAVSLAVAGQECSLALVLGGDGTILGVARRLLGSGVPLLGVNLGKVGFLAEVAATRWESSLERLLSGGVTVQERLALSFRVERDGATVHSGGAVNDVVINRGILARVINLDLRVGSERLGELRADGLIVSTPTGATGYSVSARGPLVHPQLHVYTVTPICPFLNNLLPLVLPGEARLSVTVRDRTNEVYLTQDGQEGYALQAGDVVHVERAPGGMLFATIEELSYYRKLKAKGFIKDQA.

The active-site Proton acceptor is aspartate 65. Residues 65-66 (DG), 139-140 (ND), arginine 150, arginine 167, aspartate 169, 180-185 (TGYSVS), and glutamine 239 each bind NAD(+).

Belongs to the NAD kinase family. Requires a divalent metal cation as cofactor.

The protein resides in the cytoplasm. The catalysed reaction is NAD(+) + ATP = ADP + NADP(+) + H(+). Involved in the regulation of the intracellular balance of NAD and NADP, and is a key enzyme in the biosynthesis of NADP. Catalyzes specifically the phosphorylation on 2'-hydroxyl of the adenosine moiety of NAD to yield NADP. The sequence is that of NAD kinase from Nitratidesulfovibrio vulgaris (strain DSM 19637 / Miyazaki F) (Desulfovibrio vulgaris).